The chain runs to 279 residues: Diaminopimelate epimerase (279 aa).

Positions 11 and 64 each coordinate substrate. C73 functions as the Proton donor in the catalytic mechanism. Residues 74 to 75 (GN), N170, and 187 to 188 (ER) contribute to the substrate site. C196 acts as the Proton acceptor in catalysis. Position 197 to 198 (197 to 198 (GS)) interacts with substrate. The interval 255–279 (NTDHQRRRHSLSRSPSGRPRLQECR) is disordered.

This sequence belongs to the diaminopimelate epimerase family. In terms of assembly, homodimer.

Its subcellular location is the cytoplasm. It carries out the reaction (2S,6S)-2,6-diaminopimelate = meso-2,6-diaminopimelate. The protein operates within amino-acid biosynthesis; L-lysine biosynthesis via DAP pathway; DL-2,6-diaminopimelate from LL-2,6-diaminopimelate: step 1/1. In terms of biological role, catalyzes the stereoinversion of LL-2,6-diaminopimelate (L,L-DAP) to meso-diaminopimelate (meso-DAP), a precursor of L-lysine. The polypeptide is Diaminopimelate epimerase (Methanopyrus kandleri (strain AV19 / DSM 6324 / JCM 9639 / NBRC 100938)).